The following is a 729-amino-acid chain: Translation initiation factor IF-2 (729 aa).

Positions 20–141 are disordered; that stretch reads QFAGGGRGPG…TTTVRAPVRP (122 aa). Over residues 22 to 91 the composition is skewed to gly residues; that stretch reads AGGGRGPGNP…PGGGRGGGRG (70 aa). The segment covering 92-108 has biased composition (basic and acidic residues); the sequence is GDGRRRDESFVENEGGR. Positions 112 to 127 are enriched in low complexity; that stretch reads SGRTTSTATTARTPGG. The tr-type G domain maps to 229–396; it reads PRPPVVTIMG…IILLVADLNE (168 aa). Positions 238–245 are G1; the sequence is GHVDHGKT. 238-245 provides a ligand contact to GTP; it reads GHVDHGKT. Residues 263–267 form a G2 region; it reads GITQH. Positions 284 to 287 are G3; the sequence is DTPG. GTP is bound by residues 284 to 288 and 338 to 341; these read DTPGH and NKID. A G4 region spans residues 338-341; sequence NKID. Residues 374–376 form a G5 region; the sequence is SAK.

This sequence belongs to the TRAFAC class translation factor GTPase superfamily. Classic translation factor GTPase family. IF-2 subfamily.

It is found in the cytoplasm. Its function is as follows. One of the essential components for the initiation of protein synthesis. Protects formylmethionyl-tRNA from spontaneous hydrolysis and promotes its binding to the 30S ribosomal subunits. Also involved in the hydrolysis of GTP during the formation of the 70S ribosomal complex. This chain is Translation initiation factor IF-2, found in Roseiflexus sp. (strain RS-1).